A 316-amino-acid polypeptide reads, in one-letter code: MANLKDIRDRIVSVKNTRKITEAMRLVAAAKVRRAQEQVLRSRPFADRLARVLENIQSRMSFEMADAPLLKTSDLKTITLLAVTGDRGLCGGYNSNIIKRTEQRYAELNGQGYKVDLVLIGRKAITYFSNRSSQYTIRATFTGLEQVPTSDDAESITTEVLAEFLSQSTDRIEVIYTKFINLVSCNPVVQTLLPLDPQGIAEADDEIFRLTTKDSRLTVEKGVGPANEQPPLPSDIIFEQSPEQLLNALLPLYLQNQMLRALQESAASELASRMTAMNNASDNAKALAKTLTLDYNKARQAAITQEILEVVGGSCS.

Belongs to the ATPase gamma chain family. F-type ATPases have 2 components, CF(1) - the catalytic core - and CF(0) - the membrane proton channel. CF(1) has five subunits: alpha(3), beta(3), gamma(1), delta(1), epsilon(1). CF(0) has three main subunits: a, b and c.

The protein localises to the cellular thylakoid membrane. Produces ATP from ADP in the presence of a proton gradient across the membrane. The gamma chain is believed to be important in regulating ATPase activity and the flow of protons through the CF(0) complex. The chain is ATP synthase gamma chain from Prochlorococcus marinus (strain MIT 9303).